Reading from the N-terminus, the 196-residue chain is Protein LSM12 homolog B (196 aa).

The Sm domain maps to 3-70; sequence APGPGEYFSV…LAYVSEVDII (68 aa). An AD domain is found at 81–175; that stretch reads ASLNFNKLVN…IVEKHFRDVE (95 aa).

It belongs to the LSM12 family.

The sequence is that of Protein LSM12 homolog B (lsm12b) from Danio rerio (Zebrafish).